The primary structure comprises 115 residues: Large ribosomal subunit protein bL19 (115 aa).

This sequence belongs to the bacterial ribosomal protein bL19 family.

This protein is located at the 30S-50S ribosomal subunit interface and may play a role in the structure and function of the aminoacyl-tRNA binding site. The protein is Large ribosomal subunit protein bL19 of Nitrosococcus oceani (strain ATCC 19707 / BCRC 17464 / JCM 30415 / NCIMB 11848 / C-107).